The chain runs to 376 residues: Chaperone protein DnaJ (376 aa).

A J domain is found at Asp-5–Gly-69. A CR-type zinc finger spans residues Gly-133 to Thr-215. Positions 146, 149, 163, 166, 189, 192, 203, and 206 each coordinate Zn(2+). CXXCXGXG motif repeat units follow at residues Cys-146–Gly-153, Cys-163–Gly-170, Cys-189–Gly-196, and Cys-203–Gly-210.

This sequence belongs to the DnaJ family. In terms of assembly, homodimer. The cofactor is Zn(2+).

It is found in the cytoplasm. Its function is as follows. Participates actively in the response to hyperosmotic and heat shock by preventing the aggregation of stress-denatured proteins and by disaggregating proteins, also in an autonomous, DnaK-independent fashion. Unfolded proteins bind initially to DnaJ; upon interaction with the DnaJ-bound protein, DnaK hydrolyzes its bound ATP, resulting in the formation of a stable complex. GrpE releases ADP from DnaK; ATP binding to DnaK triggers the release of the substrate protein, thus completing the reaction cycle. Several rounds of ATP-dependent interactions between DnaJ, DnaK and GrpE are required for fully efficient folding. Also involved, together with DnaK and GrpE, in the DNA replication of plasmids through activation of initiation proteins. In Listeria monocytogenes serotype 4b (strain CLIP80459), this protein is Chaperone protein DnaJ.